Here is a 657-residue protein sequence, read N- to C-terminus: Methylenetetrahydrofolate reductase 1 (657 aa).

Glutamate 18 functions as the Proton donor/acceptor in the catalytic mechanism. Residues 18–23 and 49–50 contribute to the NAD(+) site; these read EFFPPK and TW. FAD contacts are provided by residues 49 to 50, histidine 78, and 108 to 110; these read TW and RGD. Aspartate 110 provides a ligand contact to substrate. Serine 120 is subject to Phosphoserine. FAD contacts are provided by residues 129–130, tyrosine 152, aspartate 171, and lysine 178; that span reads YA. Substrate-binding residues include glutamine 189 and tyrosine 286. Serine 301 is subject to Phosphoserine. Residues 308–329 form a disordered region; it reads VNESSEEEGEDETSGEIGSIEN. Positions 311 to 321 are enriched in acidic residues; the sequence is SSEEEGEDETS. Serine 358 carries the post-translational modification Phosphoserine.

This sequence belongs to the methylenetetrahydrofolate reductase family. FAD is required as a cofactor.

The enzyme catalyses (6S)-5-methyl-5,6,7,8-tetrahydrofolate + NADP(+) = (6R)-5,10-methylene-5,6,7,8-tetrahydrofolate + NADPH + H(+). It carries out the reaction (6S)-5-methyl-5,6,7,8-tetrahydrofolate + NAD(+) = (6R)-5,10-methylene-5,6,7,8-tetrahydrofolate + NADH + H(+). It functions in the pathway one-carbon metabolism; tetrahydrofolate interconversion. The protein is Methylenetetrahydrofolate reductase 1 (MET12) of Saccharomyces cerevisiae (strain ATCC 204508 / S288c) (Baker's yeast).